The chain runs to 392 residues: 8-amino-7-oxononanoate synthase (392 aa).

Arg19 serves as a coordination point for substrate. A pyridoxal 5'-phosphate-binding site is contributed by 106–107 (GY). His131 is a binding site for substrate. 3 residues coordinate pyridoxal 5'-phosphate: Ser176, His204, and Thr233. Lys236 is modified (N6-(pyridoxal phosphate)lysine). A substrate-binding site is contributed by Thr350.

The protein belongs to the class-II pyridoxal-phosphate-dependent aminotransferase family. BioF subfamily. As to quaternary structure, homodimer. Pyridoxal 5'-phosphate serves as cofactor.

The catalysed reaction is 6-carboxyhexanoyl-[ACP] + L-alanine + H(+) = (8S)-8-amino-7-oxononanoate + holo-[ACP] + CO2. It participates in cofactor biosynthesis; biotin biosynthesis. In terms of biological role, catalyzes the decarboxylative condensation of pimeloyl-[acyl-carrier protein] and L-alanine to produce 8-amino-7-oxononanoate (AON), [acyl-carrier protein], and carbon dioxide. In Pseudomonas fluorescens (strain ATCC BAA-477 / NRRL B-23932 / Pf-5), this protein is 8-amino-7-oxononanoate synthase.